The chain runs to 363 residues: Chorismate synthase (363 aa).

The NADP(+) site is built by arginine 48 and arginine 54. Residues 125-127 (RSS), 237-238 (NA), glycine 277, 292-296 (KPTSS), and arginine 318 each bind FMN.

This sequence belongs to the chorismate synthase family. In terms of assembly, homotetramer. The cofactor is FMNH2.

The catalysed reaction is 5-O-(1-carboxyvinyl)-3-phosphoshikimate = chorismate + phosphate. It participates in metabolic intermediate biosynthesis; chorismate biosynthesis; chorismate from D-erythrose 4-phosphate and phosphoenolpyruvate: step 7/7. In terms of biological role, catalyzes the anti-1,4-elimination of the C-3 phosphate and the C-6 proR hydrogen from 5-enolpyruvylshikimate-3-phosphate (EPSP) to yield chorismate, which is the branch point compound that serves as the starting substrate for the three terminal pathways of aromatic amino acid biosynthesis. This reaction introduces a second double bond into the aromatic ring system. This is Chorismate synthase from Pseudomonas putida (strain ATCC 700007 / DSM 6899 / JCM 31910 / BCRC 17059 / LMG 24140 / F1).